An 864-amino-acid chain; its full sequence is Leucine--tRNA ligase (864 aa).

Residues 42-52 (PYPSGKLHMGH) carry the 'HIGH' region motif. Positions 624–628 (KMSKS) match the 'KMSKS' region motif. Lys627 is a binding site for ATP.

Belongs to the class-I aminoacyl-tRNA synthetase family.

It is found in the cytoplasm. The enzyme catalyses tRNA(Leu) + L-leucine + ATP = L-leucyl-tRNA(Leu) + AMP + diphosphate. In Burkholderia pseudomallei (strain 1106a), this protein is Leucine--tRNA ligase.